The primary structure comprises 222 residues: Uridine diphosphate glucose pyrophosphatase NUDT14 (222 aa).

Positions 38 to 206 (KTHDSVTILM…DIPKTLGVIY (169 aa)) constitute a Nudix hydrolase domain. The short motif at 111-129 (PGLSLEEAACKEAWEECGY) is the Nudix box element.

It belongs to the Nudix hydrolase family. In terms of assembly, homodimer. Requires Mg(2+) as cofactor.

It localises to the cytoplasm. The catalysed reaction is UDP-sugar + H2O = UMP + alpha-D-aldose 1-phosphate.. In terms of biological role, hydrolyzes UDP-glucose to glucose 1-phosphate and UMP and ADP-ribose to ribose 5-phosphate and AMP. The physiological substrate is probably UDP-glucose. Poor activity on other substrates such as ADP-glucose, CDP-glucose, GDP-glucose and GDP-mannose. In Mus musculus (Mouse), this protein is Uridine diphosphate glucose pyrophosphatase NUDT14 (Nudt14).